Reading from the N-terminus, the 336-residue chain is Methionine import ATP-binding protein MetN (336 aa).

The ABC transporter domain maps to 2-254; it reads IKIKNLKKYY…PNAKMKEFLG (253 aa). Residue 34–41 participates in ATP binding; the sequence is GHSGAGKS.

Belongs to the ABC transporter superfamily. Methionine importer (TC 3.A.1.24) family. The complex is composed of two ATP-binding proteins (MetN), two transmembrane proteins (MetI) and a solute-binding protein (MetQ).

Its subcellular location is the cell inner membrane. The catalysed reaction is L-methionine(out) + ATP + H2O = L-methionine(in) + ADP + phosphate + H(+). It catalyses the reaction D-methionine(out) + ATP + H2O = D-methionine(in) + ADP + phosphate + H(+). In terms of biological role, part of the ABC transporter complex MetNIQ involved in methionine import. Responsible for energy coupling to the transport system. In Campylobacter jejuni subsp. jejuni serotype O:2 (strain ATCC 700819 / NCTC 11168), this protein is Methionine import ATP-binding protein MetN.